A 100-amino-acid polypeptide reads, in one-letter code: uncharacterized protein (100 aa).

Residues 62-82 (IPIVIIVSIFILLIIGSISLY) traverse the membrane as a helical segment.

The protein resides in the membrane. This is an uncharacterized protein from Dictyostelium discoideum (Social amoeba).